Here is a 461-residue protein sequence, read N- to C-terminus: Photosystem II CP43 reaction center protein (461 aa).

The propeptide occupies methionine 1 to glutamate 2. Position 3 is an N-acetylthreonine (threonine 3). Threonine 3 bears the Phosphothreonine mark. Transmembrane regions (helical) follow at residues leucine 57–alanine 81, leucine 122–asparagine 143, lysine 166–threonine 188, lysine 243–serine 263, and tryptophan 279–alanine 300. Glutamate 355 provides a ligand contact to [CaMn4O5] cluster. The chain crosses the membrane as a helical span at residues arginine 435–proline 459.

The protein belongs to the PsbB/PsbC family. PsbC subfamily. As to quaternary structure, PSII is composed of 1 copy each of membrane proteins PsbA, PsbB, PsbC, PsbD, PsbE, PsbF, PsbH, PsbI, PsbJ, PsbK, PsbL, PsbM, PsbT, PsbX, PsbY, PsbZ, Psb30/Ycf12, at least 3 peripheral proteins of the oxygen-evolving complex and a large number of cofactors. It forms dimeric complexes. Binds multiple chlorophylls and provides some of the ligands for the Ca-4Mn-5O cluster of the oxygen-evolving complex. It may also provide a ligand for a Cl- that is required for oxygen evolution. PSII binds additional chlorophylls, carotenoids and specific lipids. is required as a cofactor.

Its subcellular location is the plastid. The protein resides in the chloroplast thylakoid membrane. In terms of biological role, one of the components of the core complex of photosystem II (PSII). It binds chlorophyll and helps catalyze the primary light-induced photochemical processes of PSII. PSII is a light-driven water:plastoquinone oxidoreductase, using light energy to abstract electrons from H(2)O, generating O(2) and a proton gradient subsequently used for ATP formation. In Nandina domestica (Heavenly bamboo), this protein is Photosystem II CP43 reaction center protein.